The following is a 200-amino-acid chain: Holliday junction resolvase RecU (200 aa).

4 residues coordinate Mg(2+): Thr-85, Asp-87, Glu-100, and Gln-119.

The protein belongs to the RecU family. The cofactor is Mg(2+).

The protein resides in the cytoplasm. The enzyme catalyses Endonucleolytic cleavage at a junction such as a reciprocal single-stranded crossover between two homologous DNA duplexes (Holliday junction).. Its function is as follows. Endonuclease that resolves Holliday junction intermediates in genetic recombination. Cleaves mobile four-strand junctions by introducing symmetrical nicks in paired strands. Promotes annealing of linear ssDNA with homologous dsDNA. Required for DNA repair, homologous recombination and chromosome segregation. The protein is Holliday junction resolvase RecU of Bacillus cytotoxicus (strain DSM 22905 / CIP 110041 / 391-98 / NVH 391-98).